The primary structure comprises 570 residues: Periplasmic trehalase (570 aa).

Residues M1–A34 form the signal peptide. Substrate contacts are provided by residues R159, W166 to D167, N203, H212 to Q214, R284 to E286, and G317. Active-site proton donor/acceptor residues include D319 and E503. E518 contributes to the substrate binding site. Positions K544 to Q570 are disordered. Over residues P554–Q570 the composition is skewed to low complexity.

Belongs to the glycosyl hydrolase 37 family. In terms of assembly, monomer.

It is found in the periplasm. It carries out the reaction alpha,alpha-trehalose + H2O = alpha-D-glucose + beta-D-glucose. Provides the cells with the ability to utilize trehalose at high osmolarity by splitting it into glucose molecules that can subsequently be taken up by the phosphotransferase-mediated uptake system. The polypeptide is Periplasmic trehalase (Salmonella paratyphi C (strain RKS4594)).